The primary structure comprises 103 residues: MTGRGKGGKGLGKGGAKRHRKILRDNIQGITKPAIRRLARRGGVKRISAMIYEETRGVLKTFLEGVIRDAVTYTEHAKRKTVTSLDVVYALKRQGRTLYGFGG.

Residues 1–14 (MTGRGKGGKGLGKG) are compositionally biased toward gly residues. The disordered stretch occupies residues 1 to 20 (MTGRGKGGKGLGKGGAKRHR). Position 6 is an N6-acetyl-N6-methyllysine; alternate (lysine 6). N6-methyllysine; alternate is present on residues lysine 6, lysine 9, and lysine 13. Position 13 is an N6-acetyl-N6-methyllysine; alternate (lysine 13). The DNA-binding element occupies 17–21 (KRHRK). Lysine 92 bears the N6-glutaryllysine mark.

The protein belongs to the histone H4 family. The nucleosome is a histone octamer containing two molecules each of H2A, H2B, H3 and H4 assembled in one H3-H4 heterotetramer and two H2A-H2B heterodimers. The octamer wraps approximately 147 bp of DNA. Glutarylation at Lys-92 (H4K91glu) destabilizes nucleosomes by promoting dissociation of the H2A-H2B dimers from nucleosomes.

The protein localises to the nucleus. The protein resides in the chromosome. Its function is as follows. Core component of nucleosome. Nucleosomes wrap and compact DNA into chromatin, limiting DNA accessibility to the cellular machineries which require DNA as a template. Histones thereby play a central role in transcription regulation, DNA repair, DNA replication and chromosomal stability. DNA accessibility is regulated via a complex set of post-translational modifications of histones, also called histone code, and nucleosome remodeling. This is Histone H4 (hH4-1) from Neurospora crassa (strain ATCC 24698 / 74-OR23-1A / CBS 708.71 / DSM 1257 / FGSC 987).